The chain runs to 60 residues: Probable tautomerase SAG1079 (60 aa).

The active-site Proton acceptor; via imino nitrogen is the P2.

It belongs to the 4-oxalocrotonate tautomerase family.

The sequence is that of Probable tautomerase SAG1079 from Streptococcus agalactiae serotype V (strain ATCC BAA-611 / 2603 V/R).